We begin with the raw amino-acid sequence, 208 residues long: Small ribosomal subunit protein uS4 (208 aa).

One can recognise an S4 RNA-binding domain in the interval 98–161; the sequence is RRLDNTIYRL…RQSPIILEAQ (64 aa).

This sequence belongs to the universal ribosomal protein uS4 family. In terms of assembly, part of the 30S ribosomal subunit. Contacts protein S5. The interaction surface between S4 and S5 is involved in control of translational fidelity.

Its function is as follows. One of the primary rRNA binding proteins, it binds directly to 16S rRNA where it nucleates assembly of the body of the 30S subunit. In terms of biological role, with S5 and S12 plays an important role in translational accuracy. This is Small ribosomal subunit protein uS4 from Solidesulfovibrio magneticus (strain ATCC 700980 / DSM 13731 / RS-1) (Desulfovibrio magneticus).